The chain runs to 347 residues: Tyrosine recombinase XerC 2 (347 aa).

Residues L17–A108 enclose the Core-binding (CB) domain. One can recognise a Tyr recombinase domain in the interval K125 to D313. Active-site residues include R170, K195, H265, R268, and H291. Y300 functions as the O-(3'-phospho-DNA)-tyrosine intermediate in the catalytic mechanism.

It belongs to the 'phage' integrase family.

It localises to the cytoplasm. Its function is as follows. Site-specific tyrosine recombinase, which acts by catalyzing the cutting and rejoining of the recombining DNA molecules. This is Tyrosine recombinase XerC 2 from Ralstonia nicotianae (strain ATCC BAA-1114 / GMI1000) (Ralstonia solanacearum).